The sequence spans 1202 residues: Nitric oxide synthase 3 (1202 aa).

A disordered region spans residues 1–70 (MGNLKSVGQE…PPDGPKFPRV (70 aa)). Residue Gly2 is the site of N-myristoyl glycine attachment. S-palmitoyl cysteine attachment occurs at residues Cys15 and Cys26. Residues 15-27 (CGLGLGLGLGLCG) are compositionally biased toward gly residues. The segment covering 33 to 65 (SPAPEPSQAPVPPSPTRPAPDHSPPLTRPPDGP) has biased composition (pro residues). Positions 93 and 98 each coordinate Zn(2+). Positions 97-485 (RCLGSLVFPR…PDPWKGSAAK (389 aa)) are interaction with NOSIP. Ser101 serves as a coordination point for (6R)-L-erythro-5,6,7,8-tetrahydrobiopterin. A heme b-binding site is contributed by Cys183. L-arginine contacts are provided by Gln246, Trp355, Tyr356, and Glu360. (6R)-L-erythro-5,6,7,8-tetrahydrobiopterin contacts are provided by Ala445, Trp446, and Phe459. Tyr474 lines the heme b pocket. The segment at 489–509 (ITRKKTFKEVANAVKISASLM) is calmodulin-binding. Thr494 bears the Phosphothreonine; by AMPK mark. One can recognise a Flavodoxin-like domain in the interval 519–702 (ATILYGSETG…AFRGWAQAAF (184 aa)). FMN contacts are provided by Ser525, Glu526, Thr527, Arg529, Ser571, and Thr572. 3 positions are modified to phosphoserine: Ser614, Ser632, and Ser637. Positions 653, 660, 686, and 690 each coordinate FMN. The region spanning 755 to 1001 (RKMFQATILS…IRGAPSFRLP (247 aa)) is the FAD-binding FR-type domain. Residue Arg775 coordinates NADP(+). An FAD-binding site is contributed by His797. The segment at 817-843 (EDPPPSTEPVAVEQLEKGSPGGPPPGW) is disordered. Ser835 is modified (phosphoserine). Arg937, Tyr939, Ser940, Thr955, Ala957, Tyr961, Val974, Cys975, and Ser976 together coordinate FAD. The NADP(+) site is built by Thr1015, Arg1048, Ser1077, Arg1078, Lys1084, Tyr1086, and Gln1088. A Phosphothreonine modification is found at Thr1174. Ser1176 carries the phosphoserine; by AMPK modification. Ser1178 is subject to Phosphoserine.

It belongs to the NOS family. In terms of assembly, homodimer. Interacts with NOSIP and NOSTRIN. Interacts with HSP90AB1. Forms a complex with ASL, ASS1 and SLC7A1; the complex regulates cell-autonomous L-arginine synthesis and citrulline recycling while channeling extracellular L-arginine to nitric oxide synthesis pathway. Requires heme b as cofactor. The cofactor is FAD. FMN serves as cofactor. It depends on (6R)-L-erythro-5,6,7,8-tetrahydrobiopterin as a cofactor. Post-translationally, phosphorylation by AMPK at Ser-1176 in the presence of Ca(2+)-calmodulin (CaM) activates activity. In absence of Ca(2+)-calmodulin, AMPK also phosphorylates Thr-494, resulting in inhibition of activity. In terms of tissue distribution, expressed constitutively by vascular endothelium. Detected in alveolar and serosal epithelial cells as well as in endothelial cells in one day old rat. In adult lung, detected in rare endothelial cells.

Its subcellular location is the membrane. It localises to the caveola. The protein resides in the cytoplasm. It is found in the cytoskeleton. The protein localises to the golgi apparatus. Its subcellular location is the cell membrane. It carries out the reaction 2 L-arginine + 3 NADPH + 4 O2 + H(+) = 2 L-citrulline + 2 nitric oxide + 3 NADP(+) + 4 H2O. Its activity is regulated as follows. Stimulated by calcium/calmodulin. Inhibited by NOSIP and NOSTRIN. Functionally, produces nitric oxide (NO) which is implicated in vascular smooth muscle relaxation through a cGMP-mediated signal transduction pathway. NO mediates vascular endothelial growth factor (VEGF)-induced angiogenesis in coronary vessels and promotes blood clotting through the activation of platelets. The polypeptide is Nitric oxide synthase 3 (Rattus norvegicus (Rat)).